We begin with the raw amino-acid sequence, 183 residues long: ATP synthase subunit b, chloroplastic (183 aa).

A helical transmembrane segment spans residues 28-48 (DIFEANVINILLLLFGLIYVL).

Belongs to the ATPase B chain family. F-type ATPases have 2 components, F(1) - the catalytic core - and F(0) - the membrane proton channel. F(1) has five subunits: alpha(3), beta(3), gamma(1), delta(1), epsilon(1). F(0) has four main subunits: a(1), b(1), b'(1) and c(10-14). The alpha and beta chains form an alternating ring which encloses part of the gamma chain. F(1) is attached to F(0) by a central stalk formed by the gamma and epsilon chains, while a peripheral stalk is formed by the delta, b and b' chains.

The protein resides in the plastid. Its subcellular location is the chloroplast thylakoid membrane. Functionally, f(1)F(0) ATP synthase produces ATP from ADP in the presence of a proton or sodium gradient. F-type ATPases consist of two structural domains, F(1) containing the extramembraneous catalytic core and F(0) containing the membrane proton channel, linked together by a central stalk and a peripheral stalk. During catalysis, ATP synthesis in the catalytic domain of F(1) is coupled via a rotary mechanism of the central stalk subunits to proton translocation. Component of the F(0) channel, it forms part of the peripheral stalk, linking F(1) to F(0). The protein is ATP synthase subunit b, chloroplastic of Pyropia yezoensis (Susabi-nori).